Here is a 918-residue protein sequence, read N- to C-terminus: Whirlin (918 aa).

A PDZ 1 domain is found at 141–224 (LVSLRRAKAH…LVLSVYSAGR (84 aa)). A disordered region spans residues 240–266 (PQGRSTSPPSSLPQPHGSTLRQREDDR). The PDZ 2 domain maps to 280–362 (KVNLVLGDGR…LILTVKDVGR (83 aa)). 3 disordered regions span residues 387-407 (NSAGFPGDHTEEGTSKPGFYK), 503-538 (SMKARQPPGPGVGDTYSMVSYSDTGSSTGSHGTSTT), and 560-824 (EGTG…LEPT). A compositionally biased stretch (low complexity) spans 522–538 (SYSDTGSSTGSHGTSTT). A compositionally biased stretch (polar residues) spans 563–572 (GETTQGSTNA). Pro residues-rich tracts occupy residues 591 to 600 (IKPPPPPPPL) and 638 to 649 (RSPPPGTAPTPG). A compositionally biased stretch (polar residues) spans 654–672 (QDSPSSPIYASISHANPSS). Ser696 is modified (phosphoserine). Polar residues-rich tracts occupy residues 754–773 (QTRTASTLSQLSDSGQTLSE) and 783–798 (EASTSGRGRQTASAKN). The segment covering 800–811 (NGKEQPRTERTA) has biased composition (basic and acidic residues). Residues 827–910 (LVRVRKSAAT…TKERDYIDFL (84 aa)) form the PDZ 3 domain.

As to quaternary structure, forms homooligomers. Interacts (via C-terminal PDZ domain) with MYO15A; this interaction is necessary for localization of WHRN to stereocilia tips. Interacts (via C-terminal PDZ domain) with MPP1/p55. Interacts with LRRC4C/NGL1. Interacts with MYO7A. Interacts with RPGR. Interacts with EPS8. Interacts with CASK. Interacts with CIB2. Component of USH2 complex, composed of ADGRV1, PDZD7, USH2A and WHRN. Interacts (via PDZ domains) with PDZD7; the interaction is direct. Interacts (via N-terminal PDZ domain) with USH2A (via cytoplasmic region). Interacts with ADGRV1/MASS1 (via cytoplasmic region). In terms of tissue distribution, expressed in the retina. Colocalizes with RPGR in the photoreceptor connecting cilium, a thin bridge linking the cell body and the light-sensing outer segment (at protein level). Detected in the inner ear throughout development from embryonic day 12 to 20 days after birth. Displays a dynamic pattern of expression after birth, demonstrating an ordered appearance and fade-out across stereocilia rows. Isoforms 5, 6, 7 and 8 are not detected in the retina.

It localises to the cytoplasm. It is found in the cell projection. The protein localises to the stereocilium. Its subcellular location is the growth cone. The protein resides in the photoreceptor inner segment. It localises to the synapse. Involved in hearing and vision as member of the USH2 complex. Necessary for elongation and maintenance of inner and outer hair cell stereocilia in the organ of Corti in the inner ear. Involved in the maintenance of the hair bundle ankle region, which connects stereocilia in cochlear hair cells of the inner ear. In retina photoreceptors, required for the maintenance of periciliary membrane complex that seems to play a role in regulating intracellular protein transport. This is Whirlin from Mus musculus (Mouse).